A 375-amino-acid chain; its full sequence is Superinfection exclusion protein (375 aa).

An N-terminal signal peptide occupies residues 1 to 15 (MIALLILSLACSVSA).

This sequence belongs to the serpin family. Orthopoxvirus OPG040 subfamily. As to quaternary structure, interacts with OPG185/A56 protein.

It localises to the virion membrane. It is found in the host cell membrane. Negatively regulates superinfection and syncytium formation in infected host cells. Acts in concert with OPG185/A56 protein at the host cell membrane by interacting with and inhibiting the mature virion entry/fusion complex (EFC). This mechanism ensures that new virions released from the cell cannot enter already infected cells. The sequence is that of Superinfection exclusion protein (OPG040) from Cynomys gunnisoni (Gunnison's prairie dog).